The chain runs to 728 residues: MYYSEEIGLPKTDISRWRLRSDALGRETWHYLSQSECESEPQSTFVQWLLESPDFPSPPSSDIHTPDEAARKGADFLKLLQLDNGIFPCQYKGPMFMTIGYVTANYYSKTEIPEPYRVEMIRYIVNTAHPVDGGWGLHSVDKSTCFGTTMNYVCLRLLGMEKDHPVLVKARKTLHRLGGAIKNPHWGKAWLSILNLYEWEGVNPAPPELWRLPYWLPIHPAKWWVHTRAIYLPLGYTSANRVQCELDPLLKEIRNEIYVPSQLPYESIKFGNQRNNVCGVDLYYPHTKILDFANSILSKWEAVRPKWLLNWVNKKVYDLIVKEYQNTEYLCIAPVSFAFNMVVTCHYEGSESENFKKLQNRMNDVLFHGPQGMTVMGTNGVQVWDAAFMVQYFFMTGLVDDPKYHDMIRKSYLFLVRSQFTENCVDGSFRDRRKGAWPFSTKEQGYTVSDCTAEAMKAIIMVRNHASFADIRDEIKDENLFDAVEVLLQIQNVGEWEYGSFSTYEGIKAPLLLEKLNPAEVFNNIMVEYPYVECTDSSVLGLTYFAKYYPDYKPELIQKTISSAIQYILDSQDNIDGSWYGCWGICYTYASMFALEALHTVGLDYESSSAVKKGCDFLISKQLPDGGWSESMKGCETHSYVNGENSLVVQSAWALIGLILGNYPDEEPIKRGIQFLMKRQLPTGEWKYEDIEGVFNHSCAIEYPSYRFLFPIKALGLYKNKYGDKVLV.

Residues 117–159 (RVEMIRYIVNTAHPVDGGWGLHSVDKSTCFGTTMNYVCLRLLG) form a PFTB 1 repeat. Aspartate 450 serves as the catalytic Proton donor. 2 PFTB repeats span residues 561-602 (ISSA…HTVG) and 611-657 (VKKG…ALIG).

The protein belongs to the terpene cyclase/mutase family.

Its subcellular location is the lipid droplet. The protein localises to the endoplasmic reticulum membrane. The enzyme catalyses (S)-2,3-epoxysqualene = lanosterol. Its pathway is terpene metabolism; lanosterol biosynthesis; lanosterol from farnesyl diphosphate: step 3/3. Its function is as follows. Lanosterol synthase; part of the third module of ergosterol biosynthesis pathway that includes the late steps of the pathway. ERG7 catalyzes the cyclization of (S)-2,3 oxidosqualene to lanosterol, a reaction that forms the sterol core. The third module or late pathway involves the ergosterol synthesis itself through consecutive reactions that mainly occur in the endoplasmic reticulum (ER) membrane. Firstly, the squalene synthase ERG9 catalyzes the condensation of 2 farnesyl pyrophosphate moieties to form squalene, which is the precursor of all steroids. Squalene synthase is crucial for balancing the incorporation of farnesyl diphosphate (FPP) into sterol and nonsterol isoprene synthesis. Secondly, the squalene epoxidase ERG1 catalyzes the stereospecific oxidation of squalene to (S)-2,3-epoxysqualene, which is considered to be a rate-limiting enzyme in steroid biosynthesis. Then, the lanosterol synthase ERG7 catalyzes the cyclization of (S)-2,3 oxidosqualene to lanosterol, a reaction that forms the sterol core. In the next steps, lanosterol is transformed to zymosterol through a complex process involving various demethylation, reduction and desaturation reactions. The lanosterol 14-alpha-demethylase ERG11 (also known as CYP51) catalyzes C14-demethylation of lanosterol to produce 4,4'-dimethyl cholesta-8,14,24-triene-3-beta-ol, which is critical for ergosterol biosynthesis. The C-14 reductase ERG24 reduces the C14=C15 double bond of 4,4-dimethyl-cholesta-8,14,24-trienol to produce 4,4-dimethyl-cholesta-8,24-dienol. 4,4-dimethyl-cholesta-8,24-dienol is substrate of the C-4 demethylation complex ERG25-ERG26-ERG27 in which ERG25 catalyzes the three-step monooxygenation required for the demethylation of 4,4-dimethyl and 4alpha-methylsterols, ERG26 catalyzes the oxidative decarboxylation that results in a reduction of the 3-beta-hydroxy group at the C-3 carbon to an oxo group, and ERG27 is responsible for the reduction of the keto group on the C-3. ERG28 has a role as a scaffold to help anchor ERG25, ERG26 and ERG27 to the endoplasmic reticulum and ERG29 regulates the activity of the iron-containing C4-methylsterol oxidase ERG25. Then, the sterol 24-C-methyltransferase ERG6 catalyzes the methyl transfer from S-adenosyl-methionine to the C-24 of zymosterol to form fecosterol. The C-8 sterol isomerase ERG2 catalyzes the reaction which results in unsaturation at C-7 in the B ring of sterols and thus converts fecosterol to episterol. The sterol-C5-desaturase ERG3 then catalyzes the introduction of a C-5 double bond in the B ring to produce 5-dehydroepisterol. The C-22 sterol desaturase ERG5 further converts 5-dehydroepisterol into ergosta-5,7,22,24(28)-tetraen-3beta-ol by forming the C-22(23) double bond in the sterol side chain. Finally, ergosta-5,7,22,24(28)-tetraen-3beta-ol is substrate of the C-24(28) sterol reductase ERG4 to produce ergosterol. The protein is Lanosterol synthase of Candida albicans (strain SC5314 / ATCC MYA-2876) (Yeast).